We begin with the raw amino-acid sequence, 1323 residues long: Glutamate receptor ionotropic, NMDA 2D (1323 aa).

Residues 1–27 (MRGAGGPRGPRGPAKMLLLLALACASP) form the signal peptide. Topologically, residues 28–579 (FPEEVPGPGA…SPSAFLEPYS (552 aa)) are extracellular. N-linked (GlcNAc...) asparagine glycosylation occurs at asparagine 89. Residues cysteine 101 and cysteine 345 are joined by a disulfide bond. 4 N-linked (GlcNAc...) asparagine glycosylation sites follow: asparagine 349, asparagine 363, asparagine 381, and asparagine 464. 2 disulfides stabilise this stretch: cysteine 452/cysteine 480 and cysteine 459/cysteine 481. Serine 536, threonine 538, and arginine 543 together coordinate L-glutamate. Residue asparagine 566 is glycosylated (N-linked (GlcNAc...) asparagine). The helical transmembrane segment at 580–601 (PAVWVMMFVMCLTVVAVTVFIF) threads the bilayer. Residues 602–626 (EYLSPVGYNRSLATGKRPGGSTFTI) lie on the Cytoplasmic side of the membrane. The discontinuously helical intramembrane region spans 627–638 (GKSIWLLWALVF). The interval 628–647 (KSIWLLWALVFNNSVPVENP) is pore-forming. Residues 639–650 (NNSVPVENPRGT) lie on the Cytoplasmic side of the membrane. Residues 651–671 (TSKIMVLVWAFFAVIFLASYT) form a helical membrane-spanning segment. Residues 672–840 (ANLAAFMIQE…EVMSSKLDID (169 aa)) are Extracellular-facing. N-linked (GlcNAc...) asparagine glycosylation is present at asparagine 712. L-glutamate contacts are provided by serine 714, threonine 715, and aspartate 756. Residues cysteine 770 and cysteine 825 are joined by a disulfide bond. The helical transmembrane segment at 841–864 (NMAGVFYMLLVAMGLSLLVFAWEH) threads the bilayer. Residues 865–1323 (LVYWRLRHCL…AHFSSLESEV (459 aa)) are Cytoplasmic-facing. 3 disordered regions span residues 897 to 952 (EAAP…PGGA), 977 to 1112 (AAPR…SLGG), and 1201 to 1323 (PWAA…ESEV). Residues 899–929 (APPPAKPPPPPQPLPSPAYPAARPPPGPAPF) are compositionally biased toward pro residues. Residues 931 to 940 (PRERAAADRW) show a composition bias toward basic and acidic residues. A compositionally biased stretch (low complexity) spans 977–986 (AAPRGAAGRP). The span at 987 to 1001 (LSPPTTQPPQKPPPS) shows a compositional bias: pro residues. The segment covering 1030-1039 (AAAAAAVGPP) has biased composition (low complexity). The segment covering 1080–1092 (TAPPPRRAAPPPC) has biased composition (pro residues). Positions 1208-1228 (PRRRARCGCPRPHPHRPRASH) are enriched in basic residues. Residue arginine 1303 is modified to Omega-N-methylarginine. Residue serine 1313 is modified to Phosphoserine. A PDZ-binding motif is present at residues 1321–1323 (SEV).

This sequence belongs to the glutamate-gated ion channel (TC 1.A.10.1) family. NR2D/GRIN2D subfamily. Heterotetramer. Forms heterotetrameric channels composed of two GluN1/zeta subunits (GRIN1), and two identical GluN2/epsilon subunits (GRIN2A, GRIN2B, GRIN2C or GRIN2D) or GluN3 subunits (GRIN3A or GRIN3B) (in vitro). In vivo, the subunit composition may depend on the expression levels of the different subunits. Interacts with PDZ domains of PATJ and DLG4. As to expression, expressed in brain, mainly in the subcortical region.

The protein resides in the cell membrane. It localises to the postsynaptic cell membrane. The enzyme catalyses Ca(2+)(in) = Ca(2+)(out). It carries out the reaction Na(+)(in) = Na(+)(out). The catalysed reaction is K(+)(in) = K(+)(out). Functionally, component of N-methyl-D-aspartate (NMDA) receptors (NMDARs) that function as heterotetrameric, ligand-gated cation channels with high calcium permeability and voltage-dependent block by Mg(2+). Participates in synaptic plasticity for learning and memory formation. Channel activation requires binding of the neurotransmitter L-glutamate to the GluN2 subunit, glycine or D-serine binding to the GluN1 subunit, plus membrane depolarization to eliminate channel inhibition by Mg(2+). NMDARs mediate simultaneously the potasium efflux and the influx of calcium and sodium. Each GluN2 subunit confers differential attributes to channel properties, including activation, deactivation and desensitization kinetics, pH sensitivity, Ca2(+) permeability, and binding to allosteric modulators. In Rattus norvegicus (Rat), this protein is Glutamate receptor ionotropic, NMDA 2D.